The following is a 323-amino-acid chain: MKFDRHRRLRSSATMRDMVRENHVRKEDLIYPIFVVEKDDVKKEIKSLPGVYQISLNLLESELKEAYDLGIRAIMFFGVPNSKDDIGTGAYIHDGVIQQATRIAKKMYDDLLIVADTCLCEYTDHGHCGVIDDHTHDVDNDKSLPLLVKTAISQVEAGADIIAPSNMMDGFVAEIRRGLDEAGYYNIPIMSYGVKYASSFFGPFRDAADSAPSFGDRKTYQMDPANRLEALRELESDLKEGCDMMIVKPALSYLDIVRDVKNHTNVPVVAYNVSGEYSMTKAAAQNGWIDEERVVMEQMVSMKRAGADMIITYCKDICRYLDN.

Cysteine 118, cysteine 120, and cysteine 128 together coordinate Zn(2+). Lysine 195 serves as the catalytic Schiff-base intermediate with substrate. 2 residues coordinate 5-aminolevulinate: arginine 205 and arginine 217. Glutamate 233 contributes to the Mg(2+) binding site. Lysine 248 acts as the Schiff-base intermediate with substrate in catalysis. 5-aminolevulinate contacts are provided by serine 274 and tyrosine 313.

It belongs to the ALAD family. As to quaternary structure, homooctamer. It depends on Zn(2+) as a cofactor.

The enzyme catalyses 2 5-aminolevulinate = porphobilinogen + 2 H2O + H(+). The protein operates within porphyrin-containing compound metabolism; protoporphyrin-IX biosynthesis; coproporphyrinogen-III from 5-aminolevulinate: step 1/4. Catalyzes an early step in the biosynthesis of tetrapyrroles. Binds two molecules of 5-aminolevulinate per subunit, each at a distinct site, and catalyzes their condensation to form porphobilinogen. The chain is Delta-aminolevulinic acid dehydratase (hemB) from Staphylococcus aureus.